Reading from the N-terminus, the 386-residue chain is Succinate--CoA ligase [ADP-forming] subunit beta (386 aa).

In terms of domain architecture, ATP-grasp spans 9–244 (KAVLRSYGVS…LDEEDSKEIE (236 aa)). ATP contacts are provided by residues Lys46, 53-55 (GRG), Glu99, Cys102, and Glu107. Asn199 and Asp213 together coordinate Mg(2+). Substrate contacts are provided by residues Asn264 and 321-323 (GIM).

Belongs to the succinate/malate CoA ligase beta subunit family. In terms of assembly, heterotetramer of two alpha and two beta subunits. It depends on Mg(2+) as a cofactor.

The catalysed reaction is succinate + ATP + CoA = succinyl-CoA + ADP + phosphate. It catalyses the reaction GTP + succinate + CoA = succinyl-CoA + GDP + phosphate. Its pathway is carbohydrate metabolism; tricarboxylic acid cycle; succinate from succinyl-CoA (ligase route): step 1/1. Succinyl-CoA synthetase functions in the citric acid cycle (TCA), coupling the hydrolysis of succinyl-CoA to the synthesis of either ATP or GTP and thus represents the only step of substrate-level phosphorylation in the TCA. The beta subunit provides nucleotide specificity of the enzyme and binds the substrate succinate, while the binding sites for coenzyme A and phosphate are found in the alpha subunit. The protein is Succinate--CoA ligase [ADP-forming] subunit beta of Bacillus cereus (strain B4264).